A 283-amino-acid polypeptide reads, in one-letter code: Pantothenate synthetase (283 aa).

Residue 30–37 participates in ATP binding; it reads MGNLHDGH. Residue histidine 37 is the Proton donor of the active site. Glutamine 61 is a binding site for (R)-pantoate. Glutamine 61 lines the beta-alanine pocket. 149-152 contributes to the ATP binding site; the sequence is GEKD. Glutamine 155 contacts (R)-pantoate. 186–189 is an ATP binding site; that stretch reads LSSR.

It belongs to the pantothenate synthetase family. Homodimer.

The protein localises to the cytoplasm. The enzyme catalyses (R)-pantoate + beta-alanine + ATP = (R)-pantothenate + AMP + diphosphate + H(+). The protein operates within cofactor biosynthesis; (R)-pantothenate biosynthesis; (R)-pantothenate from (R)-pantoate and beta-alanine: step 1/1. Its function is as follows. Catalyzes the condensation of pantoate with beta-alanine in an ATP-dependent reaction via a pantoyl-adenylate intermediate. The sequence is that of Pantothenate synthetase from Escherichia coli O157:H7.